The primary structure comprises 488 residues: Ribulose bisphosphate carboxylase large chain (488 aa).

The substrate site is built by N127 and T177. Residue K179 is the Proton acceptor of the active site. A substrate-binding site is contributed by K181. Mg(2+)-binding residues include K205, D207, and E208. K205 bears the N6-carboxylysine mark. Residue H297 is the Proton acceptor of the active site. Positions 298, 330, and 382 each coordinate substrate.

Belongs to the RuBisCO large chain family. Type I subfamily. Heterohexadecamer of 8 large chains and 8 small chains. Mg(2+) serves as cofactor.

It localises to the plastid. It is found in the chloroplast. It carries out the reaction 2 (2R)-3-phosphoglycerate + 2 H(+) = D-ribulose 1,5-bisphosphate + CO2 + H2O. It catalyses the reaction D-ribulose 1,5-bisphosphate + O2 = 2-phosphoglycolate + (2R)-3-phosphoglycerate + 2 H(+). Functionally, ruBisCO catalyzes two reactions: the carboxylation of D-ribulose 1,5-bisphosphate, the primary event in carbon dioxide fixation, as well as the oxidative fragmentation of the pentose substrate in the photorespiration process. Both reactions occur simultaneously and in competition at the same active site. The protein is Ribulose bisphosphate carboxylase large chain of Rhodomonas salina (Cryptomonas salina).